The sequence spans 2329 residues: Pre-mRNA-splicing factor 8 homolog (2329 aa).

The disordered stretch occupies residues 1 to 53; that stretch reads MANYGGHPQTEPHAIPDSILEEKSRKWKQLQGKRYSEKKKFGMSDTQKEEMPP. A compositionally biased stretch (basic and acidic residues) spans 34 to 53; it reads RYSEKKKFGMSDTQKEEMPP. The tract at residues 804 to 1295 is reverse transcriptase homology domain; sequence TTVHWLESRR…KIQTRIKIGL (492 aa). Residues 1296–1570 are linker; that stretch reads NSKMPSRFPP…TLKISLIQIF (275 aa). The segment at 1506–1519 is important for branch point selection; that stretch reads MKFKKLTNAQRSGL. The segment at 1574-1745 is restriction endonuclease homology domain; that stretch reads LWQKIHESVV…LRERIRKGLQ (172 aa). The RNase H homology domain stretch occupies residues 1760–2013; the sequence is NYGELFSNQI…ILGMEISAPS (254 aa). In terms of domain architecture, MPN spans 2096–2227; that stretch reads TYILPKNILK…LTAYKLTPSG (132 aa).

In terms of assembly, part of the U5 snRNP complex and of the U4/U6-U5 tri-snRNP complex.

It is found in the nucleus. Functions as a scaffold that mediates the ordered assembly of spliceosomal proteins and snRNAs. Required for the assembly of the U4/U6-U5 tri-snRNP complex. Functions as a scaffold that positions spliceosomal U2, U5 and U6 snRNAs at splice sites on pre-mRNA substrates, so that splicing can occur. Interacts with both the 5' and the 3' splice site. This is Pre-mRNA-splicing factor 8 homolog (prp-8) from Caenorhabditis elegans.